Here is a 375-residue protein sequence, read N- to C-terminus: Phytanoyl-CoA hydroxylase-interacting protein-like (375 aa).

Phosphoserine is present on residues Ser11, Ser12, and Ser15. Asn22 carries N-linked (GlcNAc...) asparagine glycosylation. A Phosphoserine modification is found at Ser24. N-linked (GlcNAc...) asparagine glycosylation is present at Asn36. In terms of domain architecture, Fibronectin type-III spans 51–160 (VPHNIKINNI…EIIEFCTADY (110 aa)).

Belongs to the PHYHIP family.

Functionally, may play a role in the development of the central system. The chain is Phytanoyl-CoA hydroxylase-interacting protein-like (Phyhipl) from Mus musculus (Mouse).